The following is a 99-amino-acid chain: Aspartyl/glutamyl-tRNA(Asn/Gln) amidotransferase subunit C (99 aa).

The protein belongs to the GatC family. In terms of assembly, heterotrimer of A, B and C subunits.

It carries out the reaction L-glutamyl-tRNA(Gln) + L-glutamine + ATP + H2O = L-glutaminyl-tRNA(Gln) + L-glutamate + ADP + phosphate + H(+). The enzyme catalyses L-aspartyl-tRNA(Asn) + L-glutamine + ATP + H2O = L-asparaginyl-tRNA(Asn) + L-glutamate + ADP + phosphate + 2 H(+). In terms of biological role, allows the formation of correctly charged Asn-tRNA(Asn) or Gln-tRNA(Gln) through the transamidation of misacylated Asp-tRNA(Asn) or Glu-tRNA(Gln) in organisms which lack either or both of asparaginyl-tRNA or glutaminyl-tRNA synthetases. The reaction takes place in the presence of glutamine and ATP through an activated phospho-Asp-tRNA(Asn) or phospho-Glu-tRNA(Gln). This is Aspartyl/glutamyl-tRNA(Asn/Gln) amidotransferase subunit C from Paracidovorax citrulli (strain AAC00-1) (Acidovorax citrulli).